The sequence spans 155 residues: Protein E6 (155 aa).

Zinc fingers lie at residues 39–75 (CNFC…CRCC) and 112–148 (CQNC…CRLC).

Belongs to the papillomaviridae E6 protein family. In terms of assembly, forms homodimers. Interacts with ubiquitin-protein ligase UBE3A/E6-AP; this interaction stimulates UBE3A ubiquitin activity. Interacts with host BAK1.

It is found in the host cytoplasm. Its subcellular location is the host nucleus. Plays a major role in the induction and maintenance of cellular transformation. E6 associates with host UBE3A/E6-AP ubiquitin-protein ligase and modulates its activity. Protects host keratinocytes from apoptosis by mediating the degradation of host BAK1. May also inhibit host immune response. This chain is Protein E6, found in Homo sapiens (Human).